Consider the following 230-residue polypeptide: Protein FAM3A (230 aa).

The N-terminal stretch at 1–33 is a signal peptide; the sequence is MRLAGPLRIVALVVSVGLTWIVVSILLGGPGSG. 2 disulfides stabilise this stretch: cysteine 59–cysteine 87 and cysteine 65–cysteine 222. Residues 68 to 226 enclose the GG-type lectin domain; the sequence is EHLAFRVVSG…LEMEGCIPRR (159 aa).

Belongs to the FAM3 family.

It localises to the secreted. The chain is Protein FAM3A (FAM3A) from Pongo abelii (Sumatran orangutan).